A 34-amino-acid chain; its full sequence is DDIT3 upstream open reading frame protein (34 aa).

As to quaternary structure, interacts with DDIT3 (isoform 1).

The protein localises to the nucleus. It is found in the cytoplasm. Functionally, product of the upstream open reading frame (uORF) of DDIT3/CHOP that is specifically produced in absence of stress, thereby preventing translation of downstream stress effector DDIT3/CHOP. This is DDIT3 upstream open reading frame protein from Homo sapiens (Human).